Here is a 547-residue protein sequence, read N- to C-terminus: Serine beta-lactamase-like protein LACTB, mitochondrial (547 aa).

A mitochondrion-targeting transit peptide spans 1–115 (MYRLMSAVTA…RAIESSRDLL (115 aa)). Positions 62–83 (GAAPAQSPAAPDPEASPLAEPP) are enriched in low complexity. Residues 62–96 (GAAPAQSPAAPDPEASPLAEPPQEQSLAPWSPQTP) are disordered. The active-site Acyl-ester intermediate is S164. An N6-succinyllysine mark is found at K283 and K284. An N6-acetyllysine mark is found at K297 and K342.

This sequence belongs to the peptidase S12 family. In terms of tissue distribution, expressed predominantly in skeletal muscle.

Its subcellular location is the mitochondrion. Mitochondrial serine protease that acts as a regulator of mitochondrial lipid metabolism. Acts by decreasing protein levels of PISD, a mitochondrial enzyme that converts phosphatidylserine (PtdSer) to phosphatidylethanolamine (PtdEtn), thereby affecting mitochondrial lipid metabolism. It is unclear whether it acts directly by mediating proteolysis of PISD or by mediating proteolysis of another lipid metabolism protein. Acts as a tumor suppressor that has the ability to inhibit proliferation of multiple types of breast cancer cells: probably by promoting decreased levels of PISD, thereby affecting mitochondrial lipid metabolism. In Homo sapiens (Human), this protein is Serine beta-lactamase-like protein LACTB, mitochondrial.